The following is a 68-amino-acid chain: U-poneritoxin(01)-Om4b (68 aa).

The signal sequence occupies residues 1–25 (MKPSGLTLAFLVVFMMAIMYNSVQA). Residues 26 to 39 (EALADADAEAFAEA) constitute a propeptide that is removed on maturation.

It belongs to the formicidae venom precursor-01 superfamily. Homo- or heterodimer with PLP4 (AC A0A348G5W0); disulfide-linked. Post-translationally, truncated sequences of this peptide have also been found in the venom. It is possible they have been cleaved in the venom. Expressed by the venom gland.

Its subcellular location is the secreted. In terms of biological role, this homodimer composed of two cationic amphipathic alpha-helical peptides has antimicrobial activities against E.coli, S.aureus (MIC=3.1 uM), and S.cerevisiae (MIC=3.1 uM). It also shows histamine-releasing activity (66.4% at 10 uM) and a weak hemolytic activity (10.5% at 50 uM). The chain is U-poneritoxin(01)-Om4b from Odontomachus monticola (Trap-jaw ant).